A 293-amino-acid chain; its full sequence is HTH-type transcriptional regulator HdfR (293 aa).

In terms of domain architecture, HTH lysR-type spans 1 to 58 (MDTELLKTFLEVSRTRHFGRAAESLYLTQSAVSFRIRQLENQLGANLFTRHRNNIRLT). The H-T-H motif DNA-binding region spans 18–37 (FGRAAESLYLTQSAVSFRIR).

It belongs to the LysR transcriptional regulatory family.

In terms of biological role, negatively regulates the transcription of the flagellar master operon flhDC by binding to the upstream region of the operon. The polypeptide is HTH-type transcriptional regulator HdfR (Yersinia pseudotuberculosis serotype O:1b (strain IP 31758)).